The chain runs to 326 residues: Undecaprenyl-phosphate 4-deoxy-4-formamido-L-arabinose transferase (326 aa).

2 helical membrane-spanning segments follow: residues 235–255 and 270–290; these read MLSV…LLLI and VFML…GMGL.

Belongs to the glycosyltransferase 2 family.

It localises to the cell inner membrane. The enzyme catalyses UDP-4-deoxy-4-formamido-beta-L-arabinose + di-trans,octa-cis-undecaprenyl phosphate = 4-deoxy-4-formamido-alpha-L-arabinopyranosyl di-trans,octa-cis-undecaprenyl phosphate + UDP. It functions in the pathway glycolipid biosynthesis; 4-amino-4-deoxy-alpha-L-arabinose undecaprenyl phosphate biosynthesis; 4-amino-4-deoxy-alpha-L-arabinose undecaprenyl phosphate from UDP-4-deoxy-4-formamido-beta-L-arabinose and undecaprenyl phosphate: step 1/2. Its pathway is bacterial outer membrane biogenesis; lipopolysaccharide biosynthesis. Catalyzes the transfer of 4-deoxy-4-formamido-L-arabinose from UDP to undecaprenyl phosphate. The modified arabinose is attached to lipid A and is required for resistance to polymyxin and cationic antimicrobial peptides. This chain is Undecaprenyl-phosphate 4-deoxy-4-formamido-L-arabinose transferase, found in Sodalis glossinidius (strain morsitans).